Here is a 212-residue protein sequence, read N- to C-terminus: FMN-dependent NADH:quinone oxidoreductase 1 (212 aa).

FMN contacts are provided by residues Ser-10, 16 to 18 (SHS), 97 to 100 (MYNF), and 145 to 148 (SRGG).

Belongs to the azoreductase type 1 family. As to quaternary structure, homodimer. It depends on FMN as a cofactor.

The catalysed reaction is 2 a quinone + NADH + H(+) = 2 a 1,4-benzosemiquinone + NAD(+). It catalyses the reaction N,N-dimethyl-1,4-phenylenediamine + anthranilate + 2 NAD(+) = 2-(4-dimethylaminophenyl)diazenylbenzoate + 2 NADH + 2 H(+). Quinone reductase that provides resistance to thiol-specific stress caused by electrophilic quinones. Functionally, also exhibits azoreductase activity. Catalyzes the reductive cleavage of the azo bond in aromatic azo compounds to the corresponding amines. The protein is FMN-dependent NADH:quinone oxidoreductase 1 of Pseudomonas fluorescens (strain Pf0-1).